The following is a 468-amino-acid chain: Aspartate ammonia-lyase (468 aa).

Residues threonine 101, serine 140, threonine 141, asparagine 142, threonine 187, and histidine 188 each coordinate L-aspartate. Residues 317–326 (GSSIMPGKVN) form an SS loop region. Serine 318 functions as the Proton acceptor in the catalytic mechanism. L-aspartate contacts are provided by serine 319 and lysine 324.

Belongs to the class-II fumarase/aspartase family. Aspartase subfamily. Homotetramer.

The enzyme catalyses L-aspartate = fumarate + NH4(+). Unlike E.coli aspartase, the enzyme is not activated by the presence of divalent metal ions at alkaline pH. Catalyzes the reversible conversion of L-aspartate to fumarate and ammonia. Is highly specific for L-aspartate in the deamination reaction, and cannot use alternative substrates such as D-aspartic acid, alpha-methyl-DL-aspartic acid, beta-methyl-DL-aspartic acid or L-glutamate. In the reverse reaction, alternative nucleophiles (such as hydroxylamine, hydrazine, methoxylamine and methylamine) can replace ammonia in vitro, leading to the formation of N-substituted aspartic acid derivatives. The polypeptide is Aspartate ammonia-lyase (Bacillus sp).